The following is a 427-amino-acid chain: Trigger factor (427 aa).

Positions 163-248 constitute a PPIase FKBP-type domain; the sequence is GDTVVIDFVG…IHEVKTKEVP (86 aa).

Belongs to the FKBP-type PPIase family. Tig subfamily.

Its subcellular location is the cytoplasm. It catalyses the reaction [protein]-peptidylproline (omega=180) = [protein]-peptidylproline (omega=0). Involved in protein export. Acts as a chaperone by maintaining the newly synthesized protein in an open conformation. Functions as a peptidyl-prolyl cis-trans isomerase. This Streptococcus agalactiae serotype Ia (strain ATCC 27591 / A909 / CDC SS700) protein is Trigger factor.